The chain runs to 532 residues: Pre-rRNA-processing protein pro-1 (532 aa).

2 WD repeats span residues 136–175 (AHYQNITKLALSDDDSMVFTASKDGAIHGYLVTELVSADR) and 287–326 (GHSDEITRLTINTDGTLLASGDASGKYCIWEISSHQCLKV). Residues 435–464 (TLGDDEDDAPEVGNQRRQNKKNNKKNRKLQ) are disordered. Residues 445-526 (EVGNQRRQNK…INRQMYEFVA (82 aa)) adopt a coiled-coil conformation. A compositionally biased stretch (basic residues) spans 451–464 (RQNKKNNKKNRKLQ).

It belongs to the WD repeat IPI3/WDR18 family. In terms of assembly, component of the PELP1 complex, composed of at least PELP1, TEX10 and WDR18. The complex interacts with pre-60S ribosome particles.

Its subcellular location is the nucleus. The protein resides in the nucleolus. The protein localises to the nucleoplasm. Its function is as follows. Component of the PELP1 complex involved in the nucleolar steps of 28S rRNA maturation and the subsequent nucleoplasmic transit of the pre-60S ribosomal subunit. Required for processing ITS2 sequences from rRNA intermediates during 26S rRNA maturation. Required in the soma to promote normal proliferation and prevent germline tumor formation. The protein is Pre-rRNA-processing protein pro-1 (pro-1) of Caenorhabditis briggsae.